A 55-amino-acid polypeptide reads, in one-letter code: MAKGIREKIKLVSSAGTGHFYTTTKNKRTKPEKLELKKFDPVVRQHVLYKEAKIK.

It belongs to the bacterial ribosomal protein bL33 family.

This is Large ribosomal subunit protein bL33 from Enterobacter sp. (strain 638).